A 338-amino-acid chain; its full sequence is Lipoate-protein ligase A (338 aa).

The BPL/LPL catalytic domain occupies 29–216; it reads PATQRVLFLW…AFFSHYGERV (188 aa). ATP-binding positions include Arg-71, 76 to 79, and Lys-134; that span reads GAVF. (R)-lipoate is bound at residue Lys-134.

It belongs to the LplA family. Monomer.

The protein localises to the cytoplasm. The catalysed reaction is L-lysyl-[lipoyl-carrier protein] + (R)-lipoate + ATP = N(6)-[(R)-lipoyl]-L-lysyl-[lipoyl-carrier protein] + AMP + diphosphate + H(+). Its pathway is protein modification; protein lipoylation via exogenous pathway; protein N(6)-(lipoyl)lysine from lipoate: step 1/2. It participates in protein modification; protein lipoylation via exogenous pathway; protein N(6)-(lipoyl)lysine from lipoate: step 2/2. Catalyzes both the ATP-dependent activation of exogenously supplied lipoate to lipoyl-AMP and the transfer of the activated lipoyl onto the lipoyl domains of lipoate-dependent enzymes. This chain is Lipoate-protein ligase A, found in Klebsiella pneumoniae subsp. pneumoniae (strain ATCC 700721 / MGH 78578).